Reading from the N-terminus, the 362-residue chain is Porin Omp2b (362 aa).

Residues 1 to 22 (MNIKSLLLGSAAALVAASGAQA) form the signal peptide.

The protein belongs to the alphaproteobacteria porin family. As to quaternary structure, homotrimer.

The protein resides in the cell outer membrane. Forms passive diffusion pores that allow small molecular weight hydrophilic materials across the outer membrane. The sequence is that of Porin Omp2b (omp2b) from Brucella abortus (strain S19).